We begin with the raw amino-acid sequence, 481 residues long: GDP-fucose protein O-fucosyltransferase 2 (481 aa).

The first 22 residues, 1-22 (MKGRAHIWVALLLACLPPRFRN), serve as a signal peptide directing secretion. Residues 59 to 63 (GEGFN), 287 to 289 (HLR), Asp-365, and 382 to 383 (RF) each bind GDP-beta-L-fucose. Glu-60 (proton acceptor) is an active-site residue.

It belongs to the glycosyltransferase 68 family.

The protein localises to the endoplasmic reticulum. The catalysed reaction is L-seryl-[protein] + GDP-beta-L-fucose = 3-O-(alpha-L-fucosyl)-L-seryl-[protein] + GDP + H(+). It catalyses the reaction L-threonyl-[protein] + GDP-beta-L-fucose = 3-O-(alpha-L-fucosyl)-L-threonyl-[protein] + GDP + H(+). Its pathway is protein modification; protein glycosylation. In terms of biological role, catalyzes the reaction that attaches fucose through an O-glycosidic linkage to a conserved serine or threonine residue in the consensus sequence C1-X-X-S/T-C2 of thrombospondin type I repeats (TSRs) where C1 and C2 are the first and second cysteines of the repeat, respectively. O-fucosylates sporozoite proteins CSP and TRAP. O-fucosylation regulates stability and intracellular trafficking of TRAP but not of CSP. Probably by regulating protein O-fucosylation, may play a role in parasite transmission to the mosquito vector and/or infection of the vertebrate host hepatocytes; however, POFUT2 involvement in transmission/infection is controversial. This chain is GDP-fucose protein O-fucosyltransferase 2, found in Plasmodium vivax (strain Salvador I).